The primary structure comprises 251 residues: Protein PBMUCL2 (251 aa).

The signal sequence occupies residues 1 to 22; sequence MPRYVPLLLLLLLLRCSERGGG. Disordered regions lie at residues 36–55 and 65–251; these read WRDGVRVPGEGASWDSDRAS and LSQS…THLL. Positions 72 to 87 are enriched in basic and acidic residues; the sequence is KHPETSPKDSRIREND. An N-linked (GlcNAc...) asparagine glycan is attached at Asn120. The span at 150 to 164 shows a compositional bias: polar residues; the sequence is TKDSVTADPGTTENF. A 15 X 11 AA approximate repeats region spans residues 153–251; it reads SVTADPGTTE…TTKHGDTHLL (99 aa). Over residues 241–251 the composition is skewed to basic and acidic residues; the sequence is ETTKHGDTHLL.

In terms of tissue distribution, detected in the brain, lung, spleen, thymus and prostate.

It is found in the secreted. This is Protein PBMUCL2 (HCG22) from Homo sapiens (Human).